The chain runs to 115 residues: Large ribosomal subunit protein P2 (115 aa).

Met1 carries the N-acetylmethionine modification. Position 19 is a phosphoserine (Ser19). Lys21 carries the post-translational modification N6-acetyllysine; alternate. The residue at position 21 (Lys21) is an N6-succinyllysine; alternate. Residues 76 to 90 (APGSAAPAAGSAPAA) are compositionally biased toward low complexity. The interval 76–115 (APGSAAPAAGSAPAAAEEKKDEKKEESEESDDDMGFGLFD) is disordered. Phosphoserine occurs at positions 79 and 86. Positions 91 to 101 (AEEKKDEKKEE) are enriched in basic and acidic residues. Residues Ser102 and Ser105 each carry the phosphoserine modification.

The protein belongs to the eukaryotic ribosomal protein P1/P2 family. In terms of assembly, heterodimer with RPLP1 at the lateral ribosomal stalk of the large ribosomal subunit.

Plays an important role in the elongation step of protein synthesis. This Rattus norvegicus (Rat) protein is Large ribosomal subunit protein P2 (Rplp2).